The sequence spans 281 residues: Ribosomal protein L11 methyltransferase (281 aa).

S-adenosyl-L-methionine is bound by residues Thr133, Gly154, Asp175, and Asn216.

This sequence belongs to the methyltransferase superfamily. PrmA family.

The protein resides in the cytoplasm. It catalyses the reaction L-lysyl-[protein] + 3 S-adenosyl-L-methionine = N(6),N(6),N(6)-trimethyl-L-lysyl-[protein] + 3 S-adenosyl-L-homocysteine + 3 H(+). Methylates ribosomal protein L11. This chain is Ribosomal protein L11 methyltransferase, found in Campylobacter jejuni subsp. jejuni serotype O:2 (strain ATCC 700819 / NCTC 11168).